A 274-amino-acid chain; its full sequence is MQVKSIKMRWESGGVNYCYLLSDSKNKKSWLIDPAEPPEVLPELTEDEKISVEAIVNTHHHYDHADGNADILKYLKEKNPTSKVEVIGGSKDCPKVTIIPENLKKLHLGDLEITCIRTPCHTRDSICYYVKDPTTDERCIFTGDTLFTAGCGRFFEGTGEEMDIALNNSILETVGRQNWSKTRVYPGHEYTSDNVKFVRKIYPQVGENKALDELEQFCSKHEVTAGRFTLKDEVEFNPFMRLEDPKVQKAAGDTNNSWDRAQIMDKLRAMKNRM.

Zn(2+)-binding residues include His59, His61, Asp63, His64, His121, and Asp144. Substrate is bound by residues Arg153 and 188-190; that span reads HEY. Residue His188 coordinates Zn(2+). Ser257 carries the phosphoserine modification. A substrate-binding site is contributed by 268-271; that stretch reads RAMK.

It belongs to the metallo-beta-lactamase superfamily. Glyoxalase II family. Zn(2+) is required as a cofactor.

The protein localises to the cytoplasm. The catalysed reaction is an S-(2-hydroxyacyl)glutathione + H2O = a 2-hydroxy carboxylate + glutathione + H(+). The enzyme catalyses (R)-S-lactoylglutathione + H2O = (R)-lactate + glutathione + H(+). Its pathway is secondary metabolite metabolism; methylglyoxal degradation; (R)-lactate from methylglyoxal: step 2/2. Inhibited by various thiol compounds such as glutathione and coenzyme A. Functionally, thiolesterase that catalyzes the hydrolysis of S-D-lactoylglutathione to form glutathione and D-lactic acid. Involved in the metabolism of methylglyoxal, a toxic compound for yeast proliferation, by converting methylglyoxal to lactate via S-D-lactoylglutathione by sequential enzyme reactions catalyzed by glyoxalase I and glyoxalase II. In Saccharomyces cerevisiae (strain ATCC 204508 / S288c) (Baker's yeast), this protein is Hydroxyacylglutathione hydrolase, cytoplasmic isozyme.